A 175-amino-acid polypeptide reads, in one-letter code: Bifunctional protein PyrR (175 aa).

The short motif at 98–110 (VIIIDDVLYTGRT) is the PRPP-binding element.

Belongs to the purine/pyrimidine phosphoribosyltransferase family. PyrR subfamily. In terms of assembly, homodimer and homohexamer; in equilibrium.

The enzyme catalyses UMP + diphosphate = 5-phospho-alpha-D-ribose 1-diphosphate + uracil. Regulates transcriptional attenuation of the pyrimidine nucleotide (pyr) operon by binding in a uridine-dependent manner to specific sites on pyr mRNA. This disrupts an antiterminator hairpin in the RNA and favors formation of a downstream transcription terminator, leading to a reduced expression of downstream genes. Its function is as follows. Also displays a weak uracil phosphoribosyltransferase activity which is not physiologically significant. The chain is Bifunctional protein PyrR from Staphylococcus aureus (strain bovine RF122 / ET3-1).